A 375-amino-acid chain; its full sequence is Alcohol dehydrogenase 1B (375 aa).

Position 1 is an N-acetylserine (Ser1). 7 residues coordinate Zn(2+): Cys46, His67, Cys97, Cys100, Cys103, Cys111, and Cys174. Residues 199 to 204 (GLGGVG), Asp223, Lys228, 293 to 295 (VGV), and Arg370 contribute to the NAD(+) site.

This sequence belongs to the zinc-containing alcohol dehydrogenase family. Class-I subfamily. In terms of assembly, multimeric (with different ratios of monomers). The cofactor is Zn(2+).

The protein resides in the cytoplasm. The catalysed reaction is a primary alcohol + NAD(+) = an aldehyde + NADH + H(+). The enzyme catalyses a secondary alcohol + NAD(+) = a ketone + NADH + H(+). This chain is Alcohol dehydrogenase 1B, found in Saara hardwickii (Indian spiny-tailed lizard).